Consider the following 168-residue polypeptide: Phosphopantetheine adenylyltransferase (168 aa).

Residue T9 participates in substrate binding. Residues 9 to 10 (TF) and H17 contribute to the ATP site. K41, L73, and R87 together coordinate substrate. ATP is bound by residues 88–90 (GLR), E98, and 123–129 (YQFISGT).

Belongs to the bacterial CoaD family. Homohexamer. It depends on Mg(2+) as a cofactor.

Its subcellular location is the cytoplasm. It carries out the reaction (R)-4'-phosphopantetheine + ATP + H(+) = 3'-dephospho-CoA + diphosphate. It functions in the pathway cofactor biosynthesis; coenzyme A biosynthesis; CoA from (R)-pantothenate: step 4/5. Its function is as follows. Reversibly transfers an adenylyl group from ATP to 4'-phosphopantetheine, yielding dephospho-CoA (dPCoA) and pyrophosphate. The protein is Phosphopantetheine adenylyltransferase of Ralstonia nicotianae (strain ATCC BAA-1114 / GMI1000) (Ralstonia solanacearum).